Consider the following 473-residue polypeptide: ATP synthase subunit beta (473 aa).

158–165 (GGAGVGKT) contributes to the ATP binding site.

It belongs to the ATPase alpha/beta chains family. F-type ATPases have 2 components, CF(1) - the catalytic core - and CF(0) - the membrane proton channel. CF(1) has five subunits: alpha(3), beta(3), gamma(1), delta(1), epsilon(1). CF(0) has three main subunits: a(1), b(2) and c(9-12). The alpha and beta chains form an alternating ring which encloses part of the gamma chain. CF(1) is attached to CF(0) by a central stalk formed by the gamma and epsilon chains, while a peripheral stalk is formed by the delta and b chains.

It is found in the cell membrane. It carries out the reaction ATP + H2O + 4 H(+)(in) = ADP + phosphate + 5 H(+)(out). Functionally, produces ATP from ADP in the presence of a proton gradient across the membrane. The catalytic sites are hosted primarily by the beta subunits. The polypeptide is ATP synthase subunit beta (Bacillus velezensis (strain DSM 23117 / BGSC 10A6 / LMG 26770 / FZB42) (Bacillus amyloliquefaciens subsp. plantarum)).